The following is a 430-amino-acid chain: MKQALRVAFGFLMLWAAVLHAEVRIEITQGVDSARPIGVVPFKWAGPGAAPEDIGGIVAADLRNSGKFNPLDRSRLPQQPATAQEVQPTAWSALGIDAVVVGQVTPNPDGSYNIAYQLVDTGGAPGTVLAQNSYKVNKQWLRYAGHTASDEVFEKLTGIKGAFRTRIAYVVQTNGGQFPYELRVSDYDGYNQFVVHRSPQPLMSPAWSPDGSKLAYVTFESGRSALVIQTLANGSVRQVASFPRHNGAPAFSPDGTKLAFALSKTGSLNLYVMDLASGQIRQITDGRSNNTEPTWFPDSQTLAFTSDQAGRPQVYKMNINGGAAQRITWEGSQNQDADVSSDGKFMVMVSSNNGQQHIAKQDLVTGGVQVLSSTFLDETPSLAPNGTMVIYSSSQGMGSVLNLVSTDGRFKARLPATDGQVKSPAWSPYL.

The N-terminal stretch at 1-21 (MKQALRVAFGFLMLWAAVLHA) is a signal peptide.

The protein belongs to the TolB family. The Tol-Pal system is composed of five core proteins: the inner membrane proteins TolA, TolQ and TolR, the periplasmic protein TolB and the outer membrane protein Pal. They form a network linking the inner and outer membranes and the peptidoglycan layer.

It localises to the periplasm. In terms of biological role, part of the Tol-Pal system, which plays a role in outer membrane invagination during cell division and is important for maintaining outer membrane integrity. TolB occupies a key intermediary position in the Tol-Pal system because it communicates directly with both membrane-embedded components, Pal in the outer membrane and TolA in the inner membrane. The protein is Tol-Pal system protein TolB of Salmonella choleraesuis (strain SC-B67).